We begin with the raw amino-acid sequence, 399 residues long: Bombesin receptor subtype-3 (399 aa).

Residues 1 to 31 are compositionally biased toward polar residues; that stretch reads MSQRQPQSPNQTLISTTNDTESSSSVVPNDS. Positions 1–38 are disordered; it reads MSQRQPQSPNQTLISTTNDTESSSSVVPNDSTNKRRTG. The Extracellular portion of the chain corresponds to 1–41; it reads MSQRQPQSPNQTLISTTNDTESSSSVVPNDSTNKRRTGDNS. N-linked (GlcNAc...) asparagine glycans are attached at residues Asn10, Asn18, and Asn29. The helical transmembrane segment at 42 to 63 threads the bilayer; sequence PGIEALCAIYITYAVIISVGIL. Residues 64 to 82 are Cytoplasmic-facing; sequence GNAILIKVFFKTKSMQTVP. Residues 83-103 traverse the membrane as a helical segment; the sequence is NIFITSLAFGDLLLLLTCVPV. The Extracellular segment spans residues 104–121; sequence DVTHYLAEGWLFGRIGCK. An intrachain disulfide couples Cys120 to Cys203. The chain crosses the membrane as a helical span at residues 122–143; the sequence is VLSFIRLTSVGVSVFTLTILSA. Residues 144–163 are Cytoplasmic-facing; sequence DRYKAVVKPLERQPPNAILK. Residues 164–184 traverse the membrane as a helical segment; that stretch reads TCAKAGCIWIMSMIIALPEAI. At 185-220 the chain is on the extracellular side; sequence FSNVYTFQDPDKNVTFKACASYPVSERLLQEIHSLL. A helical membrane pass occupies residues 221–241; sequence CFLVFYIIPLSIISVYYSLIA. The Cytoplasmic portion of the chain corresponds to 242–272; it reads RTLYKSTLNIPTEEQRHARKQIESRKRIAKT. A helical transmembrane segment spans residues 273–293; sequence VLVLVALFALCWLPNHLLYLY. Over 294–313 the chain is Extracellular; it reads RSFTSQTYMDSSTVHLFVTI. Residues 314 to 333 form a helical membrane-spanning segment; that stretch reads ISRILAFSNSCVNPFALYWL. The Cytoplasmic portion of the chain corresponds to 334-399; the sequence is SNTFQQHFKA…CSVKKEDDRV (66 aa).

It belongs to the G-protein coupled receptor 1 family. Interacts with C6orf89.

It is found in the cell membrane. Functionally, role in sperm cell division, maturation, or function. This receptor mediates its action by association with G proteins that activate a phosphatidylinositol-calcium second messenger system. The polypeptide is Bombesin receptor subtype-3 (BRS3) (Ovis aries (Sheep)).